The chain runs to 150 residues: Arginine repressor (150 aa).

It belongs to the ArgR family.

The protein resides in the cytoplasm. It functions in the pathway amino-acid biosynthesis; L-arginine biosynthesis [regulation]. Regulates arginine biosynthesis genes. The protein is Arginine repressor of Symbiobacterium thermophilum (strain DSM 24528 / JCM 14929 / IAM 14863 / T).